A 571-amino-acid polypeptide reads, in one-letter code: Gag-Pro polyprotein (571 aa).

Gly2 is lipidated: N-myristoyl glycine; by host. The short motif at 100–103 (PPPY) is the PPXY motif element. 2 repeats span residues 342–362 (PPPG…DCPT) and 367–387 (PPPG…DCPT). CCHC-type zinc fingers lie at residues 345 to 362 (GPCY…DCPT) and 370 to 387 (GPCP…DCPT). Positions 447–525 (ALMLVDTGAE…DKWQILGRDV (79 aa)) constitute a Peptidase A2 domain. Asp452 (protease; shared with dimeric partner) is an active-site residue.

In terms of assembly, homodimer; the homodimers are part of the immature particles. Interacts with human TSG101 and NEDD4; these interactions are essential for budding and release of viral particles. As to quaternary structure, homodimer; further assembles as homohexamers. In terms of processing, specific enzymatic cleavages by the viral protease yield mature proteins. The polyprotein is cleaved during and after budding, this process is termed maturation. The protease is autoproteolytically processed at its N- and C-termini. Gag polyprotein: Myristoylated. Myristoylation of the matrix (MA) domain mediates the transport and binding of Gag polyproteins to the host plasma membrane and is required for the assembly of viral particles.

It localises to the virion. Functionally, the matrix domain targets Gag, Gag-Pro and Gag-Pro-Pol polyproteins to the plasma membrane via a multipartite membrane binding signal, that includes its myristoylated N-terminus. Its function is as follows. Matrix protein. In terms of biological role, forms the spherical core of the virus that encapsulates the genomic RNA-nucleocapsid complex. Binds strongly to viral nucleic acids and promote their aggregation. Also destabilizes the nucleic acids duplexes via highly structured zinc-binding motifs. Functionally, the aspartyl protease mediates proteolytic cleavages of Gag and Gag-Pol polyproteins during or shortly after the release of the virion from the plasma membrane. Cleavages take place as an ordered, step-wise cascade to yield mature proteins. This process is called maturation. Displays maximal activity during the budding process just prior to particle release from the cell. The sequence is that of Gag-Pro polyprotein from Bos taurus (Bovine).